Here is a 322-residue protein sequence, read N- to C-terminus: Malate dehydrogenase (322 aa).

Residues 10 to 15 (GSGQIG) and Asp34 contribute to the NAD(+) site. 2 residues coordinate substrate: Arg83 and Arg89. Residues Asn96 and 119-121 (ITN) each bind NAD(+). Residues Asn121 and Arg152 each coordinate substrate. Catalysis depends on His176, which acts as the Proton acceptor.

The protein belongs to the LDH/MDH superfamily. MDH type 3 family.

It catalyses the reaction (S)-malate + NAD(+) = oxaloacetate + NADH + H(+). Catalyzes the reversible oxidation of malate to oxaloacetate. The protein is Malate dehydrogenase of Bradyrhizobium sp. (strain BTAi1 / ATCC BAA-1182).